The sequence spans 553 residues: Putative transport protein YidE (553 aa).

5 helical membrane-spanning segments follow: residues I4–I24, G28–D48, F65–S85, L95–F115, and M158–M178. 2 RCK C-terminal domains span residues K192–K276 and D279–N361. The next 5 membrane-spanning stretches (helical) occupy residues M371 to V391, A403 to F425, L437 to T457, L464 to L484, and L533 to G553.

This sequence belongs to the AAE transporter (TC 2.A.81) family. YidE subfamily.

Its subcellular location is the cell membrane. This Salmonella arizonae (strain ATCC BAA-731 / CDC346-86 / RSK2980) protein is Putative transport protein YidE.